Reading from the N-terminus, the 462-residue chain is MSLSLWQQCLARLQDELPATEFSMWIRPLQAELSDNTLALYAPNRFVLDWVRDKYLNNINGLLNDFCGSEVPLLRFEVGSKPAVRAHSHPVTASVSAPVAPVTRSAPVRPSWDSSPAQPELSYRSNVNPKHTFDNFVEGKSNQLARAAARQVADNPGGAYNPLFLYGGTGLGKTHLLHAVGNGIMARKANAKVVYMHSERFVQDMVKALQNNAIEEFKRYYRSVDALLIDDIQFFANKERSQEEFFHTFNALLEGNQQIILTSDRYPKEINGVEDRLKSRFGWGLTVAIEPPELETRVAILMKKADENDIRLPGEVAFFIAKRLRSNVRELEGALNRVIANANFTGRAITIDFVREALRDLLALQEKLVTIDNIQKTVAEYYKIKVADLLSKRRSRSVARPRQMAMALAKELTNHSLPEIGDAFGGRDHTTVLHACRKIEQLREESHDIKEDFSNLIRTLSS.

A domain I, interacts with DnaA modulators region spans residues 1–83 (MSLSLWQQCL…LRFEVGSKPA (83 aa)). Residues 83-125 (AVRAHSHPVTASVSAPVAPVTRSAPVRPSWDSSPAQPELSYRS) form a domain II region. The disordered stretch occupies residues 105–127 (SAPVRPSWDSSPAQPELSYRSNV). Residues 112 to 127 (WDSSPAQPELSYRSNV) are compositionally biased toward polar residues. The domain III, AAA+ region stretch occupies residues 126 to 342 (NVNPKHTFDN…GALNRVIANA (217 aa)). The ATP site is built by G170, G172, K173, and T174. The domain IV, binds dsDNA stretch occupies residues 343–462 (NFTGRAITID…FSNLIRTLSS (120 aa)).

Belongs to the DnaA family. In terms of assembly, oligomerizes as a right-handed, spiral filament on DNA at oriC.

It localises to the cytoplasm. Its function is as follows. Plays an essential role in the initiation and regulation of chromosomal replication. ATP-DnaA binds to the origin of replication (oriC) to initiate formation of the DNA replication initiation complex once per cell cycle. Binds the DnaA box (a 9 base pair repeat at the origin) and separates the double-stranded (ds)DNA. Forms a right-handed helical filament on oriC DNA; dsDNA binds to the exterior of the filament while single-stranded (ss)DNA is stabiized in the filament's interior. The ATP-DnaA-oriC complex binds and stabilizes one strand of the AT-rich DNA unwinding element (DUE), permitting loading of DNA polymerase. After initiation quickly degrades to an ADP-DnaA complex that is not apt for DNA replication. Binds acidic phospholipids. The sequence is that of Chromosomal replication initiator protein DnaA from Yersinia enterocolitica serotype O:8 / biotype 1B (strain NCTC 13174 / 8081).